Reading from the N-terminus, the 816-residue chain is MAMWQGAMDNRGFQQGSFNSFQSSSSDEDLMDIPGTAMDFSMRDDVPPLDGEIEEDKSYNGGGLGSSYRMMDFLEEPIPGVGTYDDFNTIDWVREKSRDRDRHREITNKSKESTWALIHSVSDAFSGWLLMLLIGLLSGSLAGLIDISAHWMTDLKEGICTEGLWFNHEHCCWNSKHVTFKDRDKCPEWNSWSQLIISADEGAFAYIVNYFMYVLWALLFAFLAVSLVKVFAPYACGSGIPEIKTILSGFIIRGYLGKWTLIIKTITLVLAVSSGLSLGKEGPLVHVACCCGNILCHCFNKYRKNEAKRREVLSAAAAAGVSVAFGAPIGGVLFSLEEVSYYFPLKTLWRSFFAALVAAFTLRSINPFGNSRLVLFYVEFHTPWHLFELVPFILLGIFGGLWGALFIRTNIAWCRKRKTTQLGKYPVIEVLVVTAITAILAFPNEYTRMSTSELISELFNDCGLLDSSKLCDYENRFNTSKAAELPDRPAGAGVYSAMWQLALTLILKIVITIFTFGMKIPSGLFIPSMAVGAIAGRLLGVGMEQLAYYHHDWAIFNSWCSQGADCITPGLYAMVGAAACLGGVTRMTVSLVVIMFELTGGLEYIVPLMAAAMTSKWVADALGREGIYDAHIRLNGYPFLEAKEEFAHKTLAMDVMKPRRNDPSLTVLTQDSMTVEDVETIISETTYSGFPVVVSRESQRLVGFVLRRDLIISIENARKKQDGVVSTSIIYFTEHSPPMPPYTPPTLKLRNILDLSPFTVTDLTPMEIVVDIFRKLGLRQCLVTHNGRLLGIITKKDVLKHIAQMANQDPDSILFN.

The tract at residues methionine 1–glutamate 28 is disordered. The Cytoplasmic segment spans residues methionine 1–alanine 124. The segment covering glycine 12–serine 25 has biased composition (low complexity). Transmembrane regions (helical) follow at residues phenylalanine 125 to glutamate 162 and valine 208 to phenylalanine 231. The Selectivity filter part_1 motif lies at glycine 237 to proline 241. Serine 238 contributes to the chloride binding site. The helical intramembrane region spans isoleucine 240–leucine 247. Helical transmembrane passes span leucine 256 to glycine 275 and glutamate 281 to asparagine 300. The Selectivity filter part_2 signature appears at glycine 279–proline 283. 2 intramembrane regions (helical) span residues valine 312–alanine 324 and proline 328–leucine 336. A run of 5 helical transmembrane segments spans residues leucine 348 to asparagine 366, leucine 389 to cysteine 414, leucine 422 to phenylalanine 442, methionine 498 to methionine 518, and glycine 523 to glycine 542. Positions glycine 523–proline 527 match the Selectivity filter part_3 motif. Phenylalanine 525 contacts chloride. Positions glycine 570–valine 584 form an intramembrane region, helical. Positions threonine 585–methionine 587 form an intramembrane region, note=Loop between two helices. Residues threonine 588–threonine 599 constitute an intramembrane region (helical). Residues glycine 600–tyrosine 604 constitute an intramembrane region (note=Loop between two helices). A helical transmembrane segment spans residues isoleucine 605–leucine 622. Residues glycine 623–asparagine 816 are Cytoplasmic-facing. A chloride-binding site is contributed by tyrosine 628. CBS domains lie at methionine 656–lysine 720 and isoleucine 752–serine 812. Residues threonine 666, tyrosine 687 to glycine 689, and threonine 794 to aspartate 797 each bind ATP.

Belongs to the chloride channel (TC 2.A.49) family. ClC-5/CLCN5 subfamily. In terms of assembly, interacts with NEDD4 and NEDD4L. Ubiquitinated by NEDD4L in the presence of albumin; which promotes endocytosis and proteasomal degradation.

Its subcellular location is the golgi apparatus membrane. The protein localises to the endosome membrane. It localises to the cell membrane. It carries out the reaction 2 chloride(in) + H(+)(out) = 2 chloride(out) + H(+)(in). Functionally, proton-coupled chloride transporter. Functions as antiport system and exchanges chloride ions against protons. Important for normal acidification of the endosome lumen. May play an important role in renal tubular function. The CLC channel family contains both chloride channels and proton-coupled anion transporters that exchange chloride or another anion for protons. The absence of conserved gating glutamate residues is typical for family members that function as channels. In Sus scrofa (Pig), this protein is H(+)/Cl(-) exchange transporter 5 (CLCN5).